The sequence spans 1132 residues: MALKGPQTLEENIGSAAPTGPCGYLYAYVTHNFPIGEASLLGNGYPEAKVFSLPLLHGLTVESDFPLNVKAVHKKIDATTASVKLTSYHREAIVFHNTHLFQPIFQGKGLEKLCRESRELFGFSTFVEQQHKGTLWSPEACPQLPCANEIFMAVIVTEGFKERLYGGKLVPVPSQTTPVHIGEHQAFKIPLYDEDLFGPSRAQELCRFYNPDISRYLHDSIFTGIAQALRVKDVSTVIQASERQFVHDQYKIPKLVQAKDFPQCASRGTDGSTLMVIDSLVAELGMSYGLSFIEGPQDSCEVLNYDTWPIFENCETPDARLRALEVWHAEQALHIGAQLFAANSVLYLTRVAKLPQKNQRGDANMYNSFYLQHGLGYLSEATVKENGASAFKGVPVSALDGSSYTLQHLAYASSFSPHLLARMCYYLQFLPHHKNTNSQSYNVVDYVGTAAPSQMCDLCQGQCPAVCINTLFYRMKDRFPPVLSNVKRDPYVITGTAGTYNDLEILGNFATFREREEEGNPVEDAPKYTYWQLCQNITEKLASMGISEGGDALRTLIVDIPSFVKVFKGIDSTVEAELLKFINCMIKNNYNFRENIKSVHHILQFACNVYWQAPCPVFLTLYYKSLLTVIQDICLTSCMMYEQDNPAVGIVPSEWLKMHFQTMWTNFKGACFDKGAITGGELKIVHQSMFCDLFDTDAAIGGMFAPARMQVRIARAMLMVPKTIKIKNRIIFSNSTGAESIQAGFMKPASQRDSYIVGGPYMKFLNALHKTLFPSTKTSALYLWHKIGQTTKNPILPGVSGEHLTELCNYVKASSQAFEEINVLDLVPDTLTSYAKIKLNSSILRACGQTQFYATTLSCLSPVTQLVPAEEYPHVLGPVGLSSPDEYRVKVAGRSVTIVQSTLKQAVSTNGRLRPIITVPLVVNKYTGSNGNTNVFHCANLGYFSGRGVDRNLRPESVPFKKNNVSSMLRKRHVIMTPLVDRLVKRIVGINSGEFEAEAVKRSVQNVLEDRDNPNLPKTVVLELVKHLGSSCASLTEEDVIYYLGPYAVLGDEVLSLLSTVGQAGVPWTAEGVASVIQDIIDDCELQFVGPEEPCLIQGQSVVEELFPSPGVPSLTVGKKRKIASLLSDLDL.

The segment at 1103–1132 (VEELFPSPGVPSLTVGKKRKIASLLSDLDL) is required for nuclear localization.

It belongs to the herpesviridae major DNA-binding protein family. Homooligomers. Forms double-helical filaments necessary for the formation of replication compartments within the host nucleus. Interacts with the origin-binding protein. Interacts with the helicase primase complex; this interaction stimulates primer synthesis activity of the helicase-primase complex. Interacts with the DNA polymerase. Interacts with the alkaline exonuclease; this interaction increases its nuclease processivity.

The protein resides in the host nucleus. Functionally, plays several crucial roles in viral infection. Participates in the opening of the viral DNA origin to initiate replication by interacting with the origin-binding protein. May disrupt loops, hairpins and other secondary structures present on ssDNA to reduce and eliminate pausing of viral DNA polymerase at specific sites during elongation. Promotes viral DNA recombination by performing strand-transfer, characterized by the ability to transfer a DNA strand from a linear duplex to a complementary single-stranded DNA circle. Can also catalyze the renaturation of complementary single strands. Additionally, reorganizes the host cell nucleus, leading to the formation of prereplicative sites and replication compartments. This process is driven by the protein which can form double-helical filaments in the absence of DNA. In Human herpesvirus 8 type P (isolate GK18) (HHV-8), this protein is Major DNA-binding protein.